Reading from the N-terminus, the 186-residue chain is dCTP deaminase, dUMP-forming (186 aa).

DCTP contacts are provided by residues 101-106 (RSSLGR), aspartate 119, 127-129 (TLE), glutamine 148, tyrosine 162, and glutamine 171. Glutamate 129 functions as the Proton donor/acceptor in the catalytic mechanism.

It belongs to the dCTP deaminase family. As to quaternary structure, homotrimer.

The catalysed reaction is dCTP + 2 H2O = dUMP + NH4(+) + diphosphate. It participates in pyrimidine metabolism; dUMP biosynthesis; dUMP from dCTP: step 1/1. Its function is as follows. Bifunctional enzyme that catalyzes both the deamination of dCTP to dUTP and the hydrolysis of dUTP to dUMP without releasing the toxic dUTP intermediate. This chain is dCTP deaminase, dUMP-forming, found in Coprothermobacter proteolyticus (strain ATCC 35245 / DSM 5265 / OCM 4 / BT).